The primary structure comprises 455 residues: N(5)-hydroxyornithine:cis-anhydromevalonyl coenzyme A-N(5)-transacylase SIDF (455 aa).

The PTS1-type peroxisomal targeting signal signature appears at 453-455 (PKL).

It belongs to the lysine N-acyltransferase mbtK family.

Its subcellular location is the peroxisome. It participates in siderophore biosynthesis. Hydroxyornithine transacylase; part of the gene cluster that mediates the biosynthesis of at least 11 siderophores, including beauverichelin A, dimerumic acid (DA), Na-dimethyl coprogen (NADC), eleutherazine B, ferricrocin (FC), fusarinine A, fusarinine C (FsC), metachelin A, mevalonolactone, rhodotorulic acid (RA) and tenellin. This cocktail of siderophores for iron metabolism is essential for virulence, and more specifically for the fungal virulence in penetrating through the host cuticle. Siderophore synthesis is also involved in conidial germination under iron-deficient conditions. For biosynthesis of fusarinine C, the transacylase SIDF transfers anhydromevalonyl to N(5)-hydroxyornithine. The required anhydromevalonyl-CoA moiety is derived from mevalonate by CoA ligation and dehydration catalyzed by SIDI and sidH respectively. The polypeptide is N(5)-hydroxyornithine:cis-anhydromevalonyl coenzyme A-N(5)-transacylase SIDF (Beauveria bassiana (strain ARSEF 2860) (White muscardine disease fungus)).